The following is a 520-amino-acid chain: Putative cytochrome P450 CYP13A4 (520 aa).

Cys-464 is a heme binding site.

It belongs to the cytochrome P450 family. Requires heme as cofactor.

In terms of biological role, cytochromes P450 are a group of heme-thiolate monooxygenases. They oxidize a variety of structurally unrelated compounds, including steroids, fatty acids, and xenobiotics. The sequence is that of Putative cytochrome P450 CYP13A4 (cyp-13A4) from Caenorhabditis elegans.